The chain runs to 380 residues: Pregnancy-associated glycoprotein 6 (380 aa).

An N-terminal signal peptide occupies residues 1–15 (MKWLVLLGLVSISEC). The propeptide at 16 to 53 (IVKIPLRRVKTMRKTLSEKNMLNNFLKEHAYRLSQISF) is activation peptide. 2 N-linked (GlcNAc...) asparagine glycosylation sites follow: Asn-57 and Asn-74. A Peptidase A1 domain is found at 71 to 377 (YLGNITIGTP…DRGHDRIGLA (307 aa)). Asp-89 is an active-site residue. A disulfide bond links Cys-102 and Cys-107. N-linked (GlcNAc...) asparagine glycosylation occurs at Asn-125. A disulfide bridge connects residues Cys-261 and Cys-265. The active site involves Asp-270. A disulfide bridge connects residues Cys-303 and Cys-337.

Belongs to the peptidase A1 family. As to expression, trophoblast and placental tissue. Produced specifically in the invasive binucleate cells of the placenta.

It is found in the secreted. It localises to the extracellular space. In Ovis aries (Sheep), this protein is Pregnancy-associated glycoprotein 6.